Here is a 318-residue protein sequence, read N- to C-terminus: Protoheme IX farnesyltransferase (318 aa).

The next 9 helical transmembrane spans lie at 37-57, 58-78, 100-120, 122-142, 155-175, 182-202, 228-248, 251-271, and 291-311; these read LVIF…HPVI, AFTA…LNMW, VTAR…VMTM, VLVN…YLVV, IVIG…AVTG, FVLF…LALY, IMLY…LGFA, LYMG…FGIW, and ILYL…GLGG.

It belongs to the UbiA prenyltransferase family. Protoheme IX farnesyltransferase subfamily.

It localises to the cell inner membrane. It carries out the reaction heme b + (2E,6E)-farnesyl diphosphate + H2O = Fe(II)-heme o + diphosphate. It functions in the pathway porphyrin-containing compound metabolism; heme O biosynthesis; heme O from protoheme: step 1/1. Converts heme B (protoheme IX) to heme O by substitution of the vinyl group on carbon 2 of heme B porphyrin ring with a hydroxyethyl farnesyl side group. The protein is Protoheme IX farnesyltransferase of Parvibaculum lavamentivorans (strain DS-1 / DSM 13023 / NCIMB 13966).